We begin with the raw amino-acid sequence, 368 residues long: DNA replication and repair protein RecF (368 aa).

ATP is bound at residue 30–37 (GNNAQGKT).

This sequence belongs to the RecF family.

It is found in the cytoplasm. Its function is as follows. The RecF protein is involved in DNA metabolism; it is required for DNA replication and normal SOS inducibility. RecF binds preferentially to single-stranded, linear DNA. It also seems to bind ATP. In Streptococcus pyogenes serotype M12 (strain MGAS9429), this protein is DNA replication and repair protein RecF.